Consider the following 190-residue polypeptide: Segregation and condensation protein B (190 aa).

The protein belongs to the ScpB family. In terms of assembly, homodimer. Homodimerization may be required to stabilize the binding of ScpA to the Smc head domains. Component of a cohesin-like complex composed of ScpA, ScpB and the Smc homodimer, in which ScpA and ScpB bind to the head domain of Smc. The presence of the three proteins is required for the association of the complex with DNA.

It is found in the cytoplasm. Its function is as follows. Participates in chromosomal partition during cell division. May act via the formation of a condensin-like complex containing Smc and ScpA that pull DNA away from mid-cell into both cell halves. The polypeptide is Segregation and condensation protein B (Bacillus cereus (strain ZK / E33L)).